A 390-amino-acid polypeptide reads, in one-letter code: O-glycoside alpha-1,2-mannosyltransferase omh1 (390 aa).

Glu-279 acts as the Nucleophile in catalysis.

Belongs to the glycosyltransferase 15 family.

The protein resides in the endoplasmic reticulum. Its subcellular location is the golgi apparatus. Its function is as follows. Mannosyltransferase involved in O-glycosylation of cell wall and secreted proteins. Plays a major role in extending alpha-1,2-linked mannose in the O-glycan pathway. The sequence is that of O-glycoside alpha-1,2-mannosyltransferase omh1 (omh1) from Schizosaccharomyces pombe (strain 972 / ATCC 24843) (Fission yeast).